Here is a 354-residue protein sequence, read N- to C-terminus: Clavesin-1 (354 aa).

Residues 118 to 279 (IKRALIDGFP…EFGGTLPPYD (162 aa)) form the CRAL-TRIO domain. A disordered region spans residues 317–354 (RECSPKPMKRSQSVVEAGTLKHEEKGENENTQPLLALD). Residues 335-344 (TLKHEEKGEN) show a composition bias toward basic and acidic residues. Polar residues predominate over residues 345–354 (ENTQPLLALD).

As to quaternary structure, forms a complex with clathrin heavy chain and gamma-adaptin.

Its subcellular location is the golgi apparatus. The protein resides in the trans-Golgi network membrane. The protein localises to the early endosome membrane. It localises to the cytoplasmic vesicle. It is found in the clathrin-coated vesicle. Required for normal morphology of late endosomes and/or lysosomes in neurons. Binds phosphatidylinositol 3,5-bisphosphate (PtdIns(3,5)P2). The protein is Clavesin-1 (Clvs1) of Mus musculus (Mouse).